Consider the following 630-residue polypeptide: Transposase B from transposon Tn554 (630 aa).

The Core-binding (CB) domain maps to 216-302; that stretch reads TYFKQLVKRY…ILEGLFSTLL (87 aa). The 188-residue stretch at 326-513 folds into the Tyr recombinase domain; that stretch reads AKPRFIDEFV…FDETLKNEFT (188 aa). Active-site residues include Arg-363, Lys-391, His-465, Arg-468, and His-491. The O-(3'-phospho-DNA)-tyrosine intermediate role is filled by Tyr-500.

This sequence belongs to the 'phage' integrase family.

In terms of biological role, one of three proteins encoded by transposon Tn554 required for its transposition. The polypeptide is Transposase B from transposon Tn554 (tnpB1) (Staphylococcus aureus (strain Mu50 / ATCC 700699)).